The sequence spans 70 residues: Large ribosomal subunit protein bL31 (70 aa).

Residues C16, C18, C38, and C41 each coordinate Zn(2+).

This sequence belongs to the bacterial ribosomal protein bL31 family. Type A subfamily. Part of the 50S ribosomal subunit. The cofactor is Zn(2+).

Functionally, binds the 23S rRNA. The sequence is that of Large ribosomal subunit protein bL31 from Mycolicibacterium gilvum (strain PYR-GCK) (Mycobacterium gilvum (strain PYR-GCK)).